A 156-amino-acid chain; its full sequence is Small ribosomal subunit protein uS7 (156 aa).

The protein belongs to the universal ribosomal protein uS7 family. As to quaternary structure, part of the 30S ribosomal subunit. Contacts proteins S9 and S11.

Its function is as follows. One of the primary rRNA binding proteins, it binds directly to 16S rRNA where it nucleates assembly of the head domain of the 30S subunit. Is located at the subunit interface close to the decoding center, probably blocks exit of the E-site tRNA. The polypeptide is Small ribosomal subunit protein uS7 (Streptococcus suis (strain 98HAH33)).